The following is a 620-amino-acid chain: UvrABC system protein C (620 aa).

The GIY-YIG domain maps to 13 to 92 (DKPGVYIMKN…IKKYSPRYNI (80 aa)). The UVR domain occupies 204-239 (TSIIKKLKLEMEKAAEELEFEKAAKIRDRILAIELI).

It belongs to the UvrC family. Interacts with UvrB in an incision complex.

It localises to the cytoplasm. Functionally, the UvrABC repair system catalyzes the recognition and processing of DNA lesions. UvrC both incises the 5' and 3' sides of the lesion. The N-terminal half is responsible for the 3' incision and the C-terminal half is responsible for the 5' incision. The chain is UvrABC system protein C from Clostridium perfringens (strain 13 / Type A).